Reading from the N-terminus, the 534-residue chain is MRRHSETDVEEQTQELKTITQLQEQCRALQIQGVKENMDQNKATLALLRSNIRRGAQDWALAKKYDQWTISKACGKNLPLRLAHCRSTMEVVREKLRKYVFDRVNMHNLLIHLVRRRGQKLESMQLELDSLRSQPDASKEELRLLQIIRQLENNIEKTMIKIITSQNIHLLYLDLLDYLKTVLAGYPIELDKLQNLVVNYCSELSDMKIMSQDAMMITDEVKRNMRQREASFIEERRARENRLNQQKKLIDKIHTKETSEKYRRGQMDLDFPSNLMSTETLKLRRKETSTAEMEYQSGVTAVVEKVKSAVRCSHVWDITSRFLAQRNTEENLELQMEDCEEWRVQLKALVKQLELEEAVLKFRQKPSSISFKSVEKKMTDMLKEEEERLQLAHSNMTKGQELLLTIQMGIDNLYVRLMGINLPATQREVVLSNTLDLNSKLAYCEGKLTYLADRVQMVSRTEEGDTKVRDTLESSTLMEKYNTRISFENREEDMIDTFQFPDMDHSYVPSRAEIKRQAQRLIEGKLKAAKKKKK.

Coiled-coil stretches lie at residues 10–54 (EEQT…NIRR), 136–209 (DASK…DMKI), and 323–396 (LAQR…HSNM).

The protein is Coiled-coil domain-containing protein 183 (CCDC183) of Homo sapiens (Human).